Reading from the N-terminus, the 250-residue chain is Pyrroloquinoline-quinone synthase (250 aa).

The protein belongs to the PqqC family.

It carries out the reaction 6-(2-amino-2-carboxyethyl)-7,8-dioxo-1,2,3,4,7,8-hexahydroquinoline-2,4-dicarboxylate + 3 O2 = pyrroloquinoline quinone + 2 H2O2 + 2 H2O + H(+). The protein operates within cofactor biosynthesis; pyrroloquinoline quinone biosynthesis. Ring cyclization and eight-electron oxidation of 3a-(2-amino-2-carboxyethyl)-4,5-dioxo-4,5,6,7,8,9-hexahydroquinoline-7,9-dicarboxylic-acid to PQQ. The chain is Pyrroloquinoline-quinone synthase from Xanthomonas campestris pv. campestris (strain 8004).